Consider the following 459-residue polypeptide: Interleukin-7 receptor subunit alpha (459 aa).

A signal peptide spans 1-20; that stretch reads MTILGTTFGVFFSLLQVVSG. Residues 21–241 lie on the Extracellular side of the membrane; that stretch reads ESGYAQNGDL…NNHSGETNPT (221 aa). Cysteine 42 and cysteine 57 are oxidised to a cystine. N-linked (GlcNAc...) asparagine glycosylation is found at asparagine 49 and asparagine 65. 2 disulfide bridges follow: cysteine 74-cysteine 82 and cysteine 108-cysteine 118. The region spanning 131–231 is the Fibronectin type-III domain; it reads APFDLSVIYR…PSYYFRTPEI (101 aa). N-linked (GlcNAc...) asparagine glycosylation is present at asparagine 182. Residues 217–221 carry the WSXWS motif motif; that stretch reads WSEWS. The helical transmembrane segment at 242–262 threads the bilayer; that stretch reads LLTISILSVLSVVLLVILACV. Residues 263–459 are Cytoplasmic-facing; that stretch reads LWKKRIKPII…VTMSSFCQKR (197 aa). The Box 1 motif signature appears at 272–280; that stretch reads IWPSLPDHK. A Phosphothreonine; by PKC modification is found at threonine 282. Residues 327–357 are disordered; that stretch reads TVPPQLEESETQRPGGDVQSPSWPSENVVTT. The segment covering 345-357 has biased composition (polar residues); it reads QSPSWPSENVVTT.

This sequence belongs to the type I cytokine receptor family. Type 4 subfamily. As to quaternary structure, the IL7 receptor is a heterodimer of IL7R and IL2RG. The TSLP receptor is a heterodimer of CRLF2 and IL7R. Interacts with CD53. In terms of processing, N-glycosylated IL-7Ralpha binds IL7 300-fold more tightly than the unglycosylated form. Post-translationally, ubiquitinated by MARCHF8; leading to lysosomal degradation.

Its subcellular location is the cell membrane. Its function is as follows. Receptor for interleukin-7. Also acts as a receptor for thymic stromal lymphopoietin (TSLP). This Callithrix jacchus (White-tufted-ear marmoset) protein is Interleukin-7 receptor subunit alpha (IL7R).